A 98-amino-acid polypeptide reads, in one-letter code: MSQISRDEVAHLARLSRLALTDAELDSFAGQLDAILTHVSQVQAVDVTGVEPTDNPLKDLNVTRPDEPMPCLTQAEALAEAPEAVDGRFAVPQILGDE.

Belongs to the GatC family. In terms of assembly, heterotrimer of A, B and C subunits.

The catalysed reaction is L-glutamyl-tRNA(Gln) + L-glutamine + ATP + H2O = L-glutaminyl-tRNA(Gln) + L-glutamate + ADP + phosphate + H(+). It catalyses the reaction L-aspartyl-tRNA(Asn) + L-glutamine + ATP + H2O = L-asparaginyl-tRNA(Asn) + L-glutamate + ADP + phosphate + 2 H(+). Its function is as follows. Allows the formation of correctly charged Asn-tRNA(Asn) or Gln-tRNA(Gln) through the transamidation of misacylated Asp-tRNA(Asn) or Glu-tRNA(Gln) in organisms which lack either or both of asparaginyl-tRNA or glutaminyl-tRNA synthetases. The reaction takes place in the presence of glutamine and ATP through an activated phospho-Asp-tRNA(Asn) or phospho-Glu-tRNA(Gln). The protein is Aspartyl/glutamyl-tRNA(Asn/Gln) amidotransferase subunit C of Mycobacterium avium (strain 104).